Here is a 370-residue protein sequence, read N- to C-terminus: NADH-quinone oxidoreductase subunit D (370 aa).

The protein belongs to the complex I 49 kDa subunit family. NDH-1 is composed of 14 different subunits. Subunits NuoB, C, D, E, F, and G constitute the peripheral sector of the complex.

The protein resides in the cell membrane. The enzyme catalyses a quinone + NADH + 5 H(+)(in) = a quinol + NAD(+) + 4 H(+)(out). NDH-1 shuttles electrons from NADH, via FMN and iron-sulfur (Fe-S) centers, to quinones in the respiratory chain. The immediate electron acceptor for the enzyme in this species is believed to be a menaquinone. Couples the redox reaction to proton translocation (for every two electrons transferred, four hydrogen ions are translocated across the cytoplasmic membrane), and thus conserves the redox energy in a proton gradient. In Clostridium beijerinckii (strain ATCC 51743 / NCIMB 8052) (Clostridium acetobutylicum), this protein is NADH-quinone oxidoreductase subunit D.